Reading from the N-terminus, the 160-residue chain is Phosphopantetheine adenylyltransferase (160 aa).

Residue threonine 10 coordinates substrate. ATP-binding positions include 10–11 (TF) and histidine 18. Substrate-binding residues include lysine 42, leucine 74, and arginine 88. Residues 89 to 91 (GLR), glutamate 99, and 124 to 130 (HGFLSST) each bind ATP.

This sequence belongs to the bacterial CoaD family. Homohexamer. Requires Mg(2+) as cofactor.

The protein resides in the cytoplasm. The enzyme catalyses (R)-4'-phosphopantetheine + ATP + H(+) = 3'-dephospho-CoA + diphosphate. It participates in cofactor biosynthesis; coenzyme A biosynthesis; CoA from (R)-pantothenate: step 4/5. Functionally, reversibly transfers an adenylyl group from ATP to 4'-phosphopantetheine, yielding dephospho-CoA (dPCoA) and pyrophosphate. The protein is Phosphopantetheine adenylyltransferase of Aliivibrio fischeri (strain MJ11) (Vibrio fischeri).